We begin with the raw amino-acid sequence, 127 residues long: UPF0389 protein GA21628 (127 aa).

The chain crosses the membrane as a helical span at residues I69–Y88.

Belongs to the UPF0389 family.

It is found in the membrane. The chain is UPF0389 protein GA21628 from Drosophila pseudoobscura pseudoobscura (Fruit fly).